Reading from the N-terminus, the 248-residue chain is MNQTNFGFKKVDYTKKQGLVNSVFSNVADKYDLMNDLMSFGLHRLWKDEFSRQIPNLNSHILDVASGSGDIALKLAKKARDRGNNIALTLSDINEEMLKNAKKKAIDLNLFQNLKFTVASAEELPFSDNSFDYYTIAFGIRNVPDINKALKEAYRVLKPMGKFICLEFSKVKESYFKDFYKFYSFSIIPTIGQAITGNKEAYEYLVESIELFPSQDEFRIMLKEAGFEEVSYKNLSGGIVAIHSAYKI.

Residues Ser-68 and Asp-92 each coordinate S-adenosyl-L-methionine.

The protein belongs to the class I-like SAM-binding methyltransferase superfamily. MenG/UbiE family.

The enzyme catalyses a 2-demethylmenaquinol + S-adenosyl-L-methionine = a menaquinol + S-adenosyl-L-homocysteine + H(+). It carries out the reaction a 2-methoxy-6-(all-trans-polyprenyl)benzene-1,4-diol + S-adenosyl-L-methionine = a 5-methoxy-2-methyl-3-(all-trans-polyprenyl)benzene-1,4-diol + S-adenosyl-L-homocysteine + H(+). It functions in the pathway quinol/quinone metabolism; menaquinone biosynthesis; menaquinol from 1,4-dihydroxy-2-naphthoate: step 2/2. It participates in cofactor biosynthesis; ubiquinone biosynthesis. Methyltransferase required for the conversion of demethylmenaquinol (DMKH2) to menaquinol (MKH2) and the conversion of 2-polyprenyl-6-methoxy-1,4-benzoquinol (DDMQH2) to 2-polyprenyl-3-methyl-6-methoxy-1,4-benzoquinol (DMQH2). This chain is Ubiquinone/menaquinone biosynthesis C-methyltransferase UbiE, found in Rickettsia felis (strain ATCC VR-1525 / URRWXCal2) (Rickettsia azadi).